The sequence spans 285 residues: MPTRQSTSWVFTLNFEGEIPILPFNESVQYACWQHERVGHDHLQGFIQFKSRNTTLRQAKYIFNGLNPHLEIARDVEKAQLYAMKEDSRVAGPWEYGLFIKRGSHKRKLMERFEEDGEEMKIADPSLYRRCLSRKMAEEQRCSSEWNYDLRPWQEEVMHLLEEEPDYRTIIWVYGPAGNEGKSTFARHLSLKDGWGYLPGGKTQDMMHLVTAEPKNNWVFDIPRVSSEYVNYGVIEQVKNRVMVNTKYEPCVMRDDNHPVHVIVFANVLPDLGKLSEDRIKLIRC.

The region spanning 3–99 is the CRESS-DNA virus Rep endonuclease domain; the sequence is TRQSTSWVFT…VAGPWEYGLF (97 aa). Positions 10-13 match the RCR-1 motif; the sequence is VFTL. A divalent metal cation is bound by residues Glu36 and His42. Positions 42–44 match the RCR-2 motif; the sequence is HLQ. Residues 52–74 carry the Nuclear localization signal motif; that stretch reads RNTTLRQAKYIFNGLNPHLEIAR. Catalysis depends on Tyr82, which acts as the For DNA cleavage activity. The short motif at 82–85 is the RCR-3 element; the sequence is YAMK. An a divalent metal cation-binding site is contributed by Asp87. A Nuclear localization signal motif is present at residues 99–105; sequence FIKRGSH. Residue 175 to 183 participates in ATP binding; that stretch reads GPAGNEGKS.

Belongs to the nanoviridea/circoviridae replication-associated protein family. Homooligomer (Potential). Rep binds to repeated DNA motifs (iterons). The cofactor is Mg(2+). It depends on Mn(2+) as a cofactor.

Its subcellular location is the host nucleus. It carries out the reaction ATP + H2O = ADP + phosphate + H(+). Its function is as follows. Initiates and terminates the replication only of its own subviral DNA molecule. The closed circular ssDNA genome is first converted to a superhelical dsDNA. Rep binds a specific hairpin at the genome origin of replication. Introduces an endonucleolytic nick within the intergenic region of the genome, thereby initiating the rolling circle replication (RCR). Following cleavage, binds covalently to the 5'-phosphate of DNA as a tyrosyl ester. The cleavage gives rise to a free 3'-OH that serves as a primer for the cellular DNA polymerase. The polymerase synthesizes the (+) strand DNA by rolling circle mechanism. After one round of replication, a Rep-catalyzed nucleotidyl transfer reaction releases a circular single-stranded virus genome, thereby terminating the replication. Displays origin-specific DNA cleavage, nucleotidyl transferase, ATPase and helicase activities. The protein is Para-Rep C6 (C6) of Subterranean clover stunt C6 alphasatellite (SCSC6A).